The chain runs to 140 residues: uncharacterized protein (140 aa).

Over residues 1 to 19 (MGLCGSKTQPMPSQTTTVA) the composition is skewed to polar residues. The interval 1 to 140 (MGLCGSKTQP…ERERENMIYD (140 aa)) is disordered. Gly-2 carries the N-myristoyl glycine lipid modification. Residue Cys-4 is the site of S-palmitoyl cysteine attachment. Residues 27-40 (INRDTVKSKQELRH) are compositionally biased toward basic and acidic residues. Residues 41 to 51 (KEKKDKKKKTQ) show a composition bias toward basic residues. A compositionally biased stretch (basic and acidic residues) spans 73–140 (DPSKNKVSPK…ERERENMIYD (68 aa)).

To S.pombe new13. Myristoylated. Post-translationally, the N-myristoylated protein is further palmitoylated by ERF2, PFA4 and slightly by PFA5, but not by PFA3.

It localises to the cytoplasm. The protein resides in the cytosol. This is an uncharacterized protein from Saccharomyces cerevisiae (strain ATCC 204508 / S288c) (Baker's yeast).